The chain runs to 384 residues: Protein RecA (384 aa).

76–83 (GPESSGKT) is a binding site for ATP. The disordered stretch occupies residues 346 to 365 (QGSAEPEKAAKPEKVEKADK). A compositionally biased stretch (basic and acidic residues) spans 350–365 (EPEKAAKPEKVEKADK).

It belongs to the RecA family.

Its subcellular location is the cytoplasm. Its function is as follows. Can catalyze the hydrolysis of ATP in the presence of single-stranded DNA, the ATP-dependent uptake of single-stranded DNA by duplex DNA, and the ATP-dependent hybridization of homologous single-stranded DNAs. It interacts with LexA causing its activation and leading to its autocatalytic cleavage. This Polaromonas naphthalenivorans (strain CJ2) protein is Protein RecA.